We begin with the raw amino-acid sequence, 401 residues long: Argininosuccinate synthase (401 aa).

Residues 7–15 (AYSGGLDTS) and Ala34 contribute to the ATP site. Tyr85 and Ser90 together coordinate L-citrulline. Residue Gly115 participates in ATP binding. Residues Thr117, Asn121, and Asp122 each coordinate L-aspartate. L-citrulline is bound at residue Asn121. 5 residues coordinate L-citrulline: Arg125, Ser174, Ser183, Glu259, and Tyr271.

It belongs to the argininosuccinate synthase family. Type 1 subfamily. In terms of assembly, homotetramer.

It localises to the cytoplasm. The catalysed reaction is L-citrulline + L-aspartate + ATP = 2-(N(omega)-L-arginino)succinate + AMP + diphosphate + H(+). It functions in the pathway amino-acid biosynthesis; L-arginine biosynthesis; L-arginine from L-ornithine and carbamoyl phosphate: step 2/3. The protein is Argininosuccinate synthase of Desulforamulus reducens (strain ATCC BAA-1160 / DSM 100696 / MI-1) (Desulfotomaculum reducens).